An 830-amino-acid chain; its full sequence is ABC transporter G family member STR (830 aa).

The Cytoplasmic portion of the chain corresponds to 1–551 (MAKFKRTDTN…RTTLNVIRTP (551 aa)). The ABC transporter domain maps to 46–297 (LEFNNLSYSV…LAGFARPVPD (252 aa)). Residue 90 to 97 (GPSGAGKS) coordinates ATP. Disordered regions lie at residues 333–356 (DQAA…PYAK), 368–422 (SHFS…SMQS), and 471–491 (SMSS…NKTP). Over residues 368–378 (SHFSTGNMNSQ) the composition is skewed to polar residues. Over residues 395–405 (DYEDDDDEDEF) the composition is skewed to acidic residues. Positions 471 to 483 (SMSSSQFSMTQQT) are enriched in low complexity. The chain crosses the membrane as a helical span at residues 552–572 (ELFLSREIVLTVMGLVLSSFF). Residues 573–588 (KKLSHFDFKTINHLLN) are Extracellular-facing. A helical membrane pass occupies residues 589-609 (FYIFTICLVFFSSNDAVPTFI). The Cytoplasmic segment spans residues 610–630 (QERFIFIRETSHNAYRASSYV). The helical transmembrane segment at 631–651 (ISSLIVYLPFFAIQGFTFAGI) threads the bilayer. Residues 652–661 (TQYILHLNSS) lie on the Extracellular side of the membrane. An N-linked (GlcNAc...) asparagine glycan is attached at asparagine 659. Residues 662-682 (ILSFWLILYSSLVTSNAYVML) form a helical membrane-spanning segment. The Cytoplasmic segment spans residues 683–690 (VSALVPSY). The chain crosses the membrane as a helical span at residues 691–711 (ITGYAVVIATTALFFLTCGFF). At 712 to 798 (LKRTQIPLVW…LFSMDIREEN (87 aa)) the chain is on the extracellular side. 2 N-linked (GlcNAc...) asparagine glycosylation sites follow: asparagine 771 and asparagine 780. Residues 799-819 (IWLDIVILLAWGVLYRLFFYV) traverse the membrane as a helical segment. Over 820-830 (VLRFYSKNERK) the chain is Cytoplasmic.

The protein belongs to the ABC transporter superfamily. ABCG family. Stunted arbuscule (STR) subfamily. Heterodimerizes with STR2; the resulting transporter is located in the peri-arbuscular membrane.

It is found in the cell membrane. Functionally, together with STR2, required for arbuscule development in arbuscular mycorrhizal (AM) symbiosis. The chain is ABC transporter G family member STR from Petunia hybrida (Petunia).